The sequence spans 122 residues: MIQPQSHLNVADNSGARELMCIRIIGASNRRYAHIGDIIVAVIKEALPNTPLERSEVIRAVIVRTCKELKRDNGMIIRYDDNAAVVIDQEGNPKGTRVFGAIARELRQLNFTKIVSLAPEVL.

It belongs to the universal ribosomal protein uL14 family. In terms of assembly, part of the 50S ribosomal subunit.

It localises to the plastid. The protein resides in the chloroplast. Binds to 23S rRNA. This is Large ribosomal subunit protein uL14c from Eucalyptus globulus subsp. globulus (Tasmanian blue gum).